The following is a 381-amino-acid chain: 1-deoxy-D-xylulose 5-phosphate reductoisomerase (381 aa).

NADPH contacts are provided by S10, G11, S12, I13, G36, K37, N38, and N121. K122 contacts 1-deoxy-D-xylulose 5-phosphate. E123 is an NADPH binding site. D147 contacts Mn(2+). 1-deoxy-D-xylulose 5-phosphate contacts are provided by S148, E149, S173, and H196. Residue E149 participates in Mn(2+) binding. G202 provides a ligand contact to NADPH. Residues S209, N214, K215, and E218 each coordinate 1-deoxy-D-xylulose 5-phosphate. E218 contributes to the Mn(2+) binding site.

This sequence belongs to the DXR family. The cofactor is Mg(2+). It depends on Mn(2+) as a cofactor.

The enzyme catalyses 2-C-methyl-D-erythritol 4-phosphate + NADP(+) = 1-deoxy-D-xylulose 5-phosphate + NADPH + H(+). Its pathway is isoprenoid biosynthesis; isopentenyl diphosphate biosynthesis via DXP pathway; isopentenyl diphosphate from 1-deoxy-D-xylulose 5-phosphate: step 1/6. Catalyzes the NADPH-dependent rearrangement and reduction of 1-deoxy-D-xylulose-5-phosphate (DXP) to 2-C-methyl-D-erythritol 4-phosphate (MEP). The protein is 1-deoxy-D-xylulose 5-phosphate reductoisomerase of Geobacillus sp. (strain WCH70).